The primary structure comprises 91 residues: UPF0213 protein NGO_1598 (91 aa).

The GIY-YIG domain occupies 4 to 83 (SNWSVYLILC…AAQKRQLWEQ (80 aa)).

Belongs to the UPF0213 family.

The sequence is that of UPF0213 protein NGO_1598 from Neisseria gonorrhoeae (strain ATCC 700825 / FA 1090).